The sequence spans 269 residues: 2-dehydro-3-deoxyphosphooctonate aldolase (269 aa).

The protein belongs to the KdsA family.

It localises to the cytoplasm. It catalyses the reaction D-arabinose 5-phosphate + phosphoenolpyruvate + H2O = 3-deoxy-alpha-D-manno-2-octulosonate-8-phosphate + phosphate. It functions in the pathway carbohydrate biosynthesis; 3-deoxy-D-manno-octulosonate biosynthesis; 3-deoxy-D-manno-octulosonate from D-ribulose 5-phosphate: step 2/3. It participates in bacterial outer membrane biogenesis; lipopolysaccharide biosynthesis. This chain is 2-dehydro-3-deoxyphosphooctonate aldolase, found in Chlamydia abortus (strain DSM 27085 / S26/3) (Chlamydophila abortus).